Consider the following 306-residue polypeptide: Acetaldehyde dehydrogenase (306 aa).

C131 functions as the Acyl-thioester intermediate in the catalytic mechanism. NAD(+) contacts are provided by residues 162–170 (SAGPGTRKN) and N273.

This sequence belongs to the acetaldehyde dehydrogenase family.

It catalyses the reaction acetaldehyde + NAD(+) + CoA = acetyl-CoA + NADH + H(+). In Albidiferax ferrireducens (strain ATCC BAA-621 / DSM 15236 / T118) (Rhodoferax ferrireducens), this protein is Acetaldehyde dehydrogenase.